The following is an 80-amino-acid chain: Dolichol-phosphate mannose synthase subunit 2 (80 aa).

Helical transmembrane passes span 10–30 and 50–70; these read LLLS…VIIL and ILVP…FIGM.

This sequence belongs to the DPM2 family. Component of the dolichol-phosphate mannose (DPM) synthase complex composed of DPMS1, DPMS2 and DPMS3; in the complex interacts directly with DPMS3. Associates with the GPI-GlcNAc transferase (GPI-GnT) complex.

Its subcellular location is the endoplasmic reticulum membrane. Its pathway is protein modification; protein glycosylation. Functionally, regulates the biosynthesis of dolichol phosphate-mannose. Regulatory subunit of the dolichol-phosphate mannose (DPM) synthase complex; essential for the ER localization and stable expression of DPMS1. This chain is Dolichol-phosphate mannose synthase subunit 2, found in Arabidopsis thaliana (Mouse-ear cress).